Reading from the N-terminus, the 198-residue chain is Septum-promoting GTP-binding protein 1 (198 aa).

Residues 6 to 198 form a small GTPase-like region; it reads KNNVTIKVGM…GDPILEYIDR (193 aa). GTP contacts are provided by residues 17-24, 65-69, and 122-125; these read GDSSIGKT, DLGGQ, and TKYD.

As to quaternary structure, interacts with cdc7 and cdc11.

Functionally, GTP-binding protein essential for the induction of septum formation at G2 and pre-START stages of mitosis. Acts via the cdc7 protein kinase pathway. The protein is Septum-promoting GTP-binding protein 1 (spg1) of Schizosaccharomyces pombe (strain 972 / ATCC 24843) (Fission yeast).